We begin with the raw amino-acid sequence, 184 residues long: MILEATARRVHIIQGEYKVIGDPEVVLATILGSCVAACLRDPVAGVGGMNHFLLPGMASSPTSGGDATRYGVHLMELLINGLLKQGARRDRLEAKVFGGAKTIATFSNVGEQNAAFAMQFLRDEGIPVVSSSTGGEHGRKVEYWPVSGRARQYPLTGAETQKTVALEQRPVAAPKPVDNAIEFF.

This sequence belongs to the CheD family.

It carries out the reaction L-glutaminyl-[protein] + H2O = L-glutamyl-[protein] + NH4(+). Probably deamidates glutamine residues to glutamate on methyl-accepting chemotaxis receptors (MCPs), playing an important role in chemotaxis. This is Probable chemoreceptor glutamine deamidase CheD from Rhizobium rhizogenes (strain K84 / ATCC BAA-868) (Agrobacterium radiobacter).